Consider the following 85-residue polypeptide: DNA-directed RNA polymerase subunit Rpo11 (85 aa).

This sequence belongs to the archaeal Rpo11/eukaryotic RPB11/RPC19 RNA polymerase subunit family. In terms of assembly, part of the RNA polymerase complex.

It localises to the cytoplasm. The enzyme catalyses RNA(n) + a ribonucleoside 5'-triphosphate = RNA(n+1) + diphosphate. In terms of biological role, DNA-dependent RNA polymerase (RNAP) catalyzes the transcription of DNA into RNA using the four ribonucleoside triphosphates as substrates. This chain is DNA-directed RNA polymerase subunit Rpo11, found in Methanothermobacter thermautotrophicus (strain ATCC 29096 / DSM 1053 / JCM 10044 / NBRC 100330 / Delta H) (Methanobacterium thermoautotrophicum).